The primary structure comprises 343 residues: Melanoma-associated antigen B18 (343 aa).

Residues methionine 1–glutamine 17 are compositionally biased toward basic residues. The segment at methionine 1–tryptophan 102 is disordered. Over residues alanine 67–serine 87 the composition is skewed to polar residues. Residues glutamine 88–tryptophan 102 are compositionally biased toward basic and acidic residues. The segment at glutamate 100–lysine 343 is interaction with LNX1. The 200-residue stretch at leucine 107 to alanine 306 folds into the MAGE domain. The segment at arginine 313–lysine 343 is disordered. Residues alanine 316 to arginine 333 are compositionally biased toward low complexity. The span at threonine 334–lysine 343 shows a compositional bias: polar residues.

As to quaternary structure, interacts with LNX1.

It localises to the cytoplasm. Functionally, may enhance ubiquitin ligase activity of RING-type zinc finger-containing E3 ubiquitin-protein ligases. Proposed to act through recruitment and/or stabilization of the Ubl-conjugating enzyme (E2) at the E3:substrate complex. The polypeptide is Melanoma-associated antigen B18 (MAGEB18) (Homo sapiens (Human)).